We begin with the raw amino-acid sequence, 67 residues long: Large ribosomal subunit protein bL35 (67 aa).

Positions 22-52 (VLAGPGKKRHNLSARSQKAKRQNRGSQVLTH) are disordered. Over residues 27-44 (GKKRHNLSARSQKAKRQN) the composition is skewed to basic residues.

Belongs to the bacterial ribosomal protein bL35 family.

The protein is Large ribosomal subunit protein bL35 of Granulibacter bethesdensis (strain ATCC BAA-1260 / CGDNIH1).